The chain runs to 570 residues: MSMFCYQCQEAAGGRGCTVKGVCGKTEDIAKTQDLIIYVVKGIAIYSSQVREIGLNTSEADKFIVESLFSTITNANFDAKALNARVQEGLKIRQSLKDAIIKAGGSYNSKENKSWTSKFLSVLGIKNDKDEKEIHDAAAWAANNPEDFKKKAETVGILATENEDIRSLRELLTYGLKGMAAYLEHANNLGYDEDSIHAFMEKALVATLDDTLSADELTALVLECGKYGVDVMALLDKANTSTYGNPEITKVNIGVRNNPGILISGHDLKDMEELLKQTEGTGVDVYTHSEMLPANYYPAFKKYKHFVGNYGNAWWKQNEEFEAFNGPILMTTNCIVTPKASYKDRMYTTGVTGFEGVKHINASKDGKKDFSEIIEHAKRCSSPKEIEKGEIIGGFAHNQVLALAPQVVDAVKTGAIKRFFVMAGCDGRMKSRNYYTDFAKALPKDTVILTAGCAKYKYNKLDLGDINGIPRVLDAGQCNDSYSLAVIALKLKEVFELEDINELPISYNIAWYEQKAVIVLLALLHLGVKNIHLGPTLPAFLSPNVAKILVENFGIGTISSVDKDIKMFMN.

The [4Fe-4S] cluster site is built by C5, C8, C17, and C23. Residues H266, E290, C334, C425, C453, C478, E513, and K515 each contribute to the hybrid [4Fe-2O-2S] cluster site. Cysteine persulfide is present on C425.

The protein belongs to the HCP family. It depends on [4Fe-4S] cluster as a cofactor. Hybrid [4Fe-2O-2S] cluster serves as cofactor.

The protein localises to the cytoplasm. It catalyses the reaction A + NH4(+) + H2O = hydroxylamine + AH2 + H(+). Functionally, catalyzes the reduction of hydroxylamine to form NH(3) and H(2)O. This is Hydroxylamine reductase from Clostridium botulinum (strain ATCC 19397 / Type A).